The sequence spans 356 residues: Protein RecA (356 aa).

77–84 (GPESSGKT) contributes to the ATP binding site.

Belongs to the RecA family.

The protein localises to the cytoplasm. Functionally, can catalyze the hydrolysis of ATP in the presence of single-stranded DNA, the ATP-dependent uptake of single-stranded DNA by duplex DNA, and the ATP-dependent hybridization of homologous single-stranded DNAs. It interacts with LexA causing its activation and leading to its autocatalytic cleavage. The chain is Protein RecA from Caulobacter vibrioides (strain ATCC 19089 / CIP 103742 / CB 15) (Caulobacter crescentus).